The chain runs to 173 residues: HAM34 protein (173 aa).

The span at 22–89 (AAPATTPDTA…ADGTQTATAP (68 aa)) shows a compositional bias: low complexity. Residues 22 to 155 (AAPATTPDTA…ATDTTSGASH (134 aa)) form a disordered region. Residues 95–133 (TEESSASGEMTPTVGTDTSDQVSDSTAAGPSTPEGSMTG) show a composition bias toward polar residues. The span at 134–155 (TSTPKASDSSSSATDTTSGASH) shows a compositional bias: low complexity.

Germinating spores.

In terms of biological role, could be a structural protein required for the infection process of B.lactucae. The chain is HAM34 protein (HAM34) from Bremia lactucae (Lettuce downy mildew).